Consider the following 83-residue polypeptide: Non-muscle caldesmon (83 aa).

Composition is skewed to basic and acidic residues over residues 1–44 and 62–76; these read QTSE…KEEK and NQLK…KESK. The segment at 1–63 is myosin and calmodulin-binding; that stretch reads QTSEKEGRSE…PKPGSIEENQ (63 aa). Residues 1–83 form a disordered region; it reads QTSEKEGRSE…ESKNILSLCL (83 aa).

In non-muscle cells, phosphorylation by CDC2 during mitosis causes caldesmon to dissociate from microfilaments. Phosphorylation reduces caldesmon binding to actin, myosin, and calmodulin as well as its inhibition of actomyosin ATPase activity. Phosphorylation also occurs in both quiescent and dividing smooth muscle cells with similar effects on the interaction with actin and calmodulin and on microfilaments reorganization.

It localises to the cytoplasm. The protein localises to the cytoskeleton. The protein resides in the myofibril. Its subcellular location is the stress fiber. Functionally, actin- and myosin-binding protein implicated in the regulation of actomyosin interactions in smooth muscle and nonmuscle cells (could act as a bridge between myosin and actin filaments). Stimulates actin binding of tropomyosin which increases the stabilization of actin filament structure. In muscle tissues, inhibits the actomyosin ATPase by binding to F-actin. This inhibition is attenuated by calcium-calmodulin and is potentiated by tropomyosin. Interacts with actin, myosin, two molecules of tropomyosin and with calmodulin. Also plays an essential role during cellular mitosis and receptor capping. This Bos taurus (Bovine) protein is Non-muscle caldesmon (CALD1).